Consider the following 334-residue polypeptide: MESLINPSHGGGNYDSHSSSLDSLKPSVLVIILILLMTLLISVSICFLLRCLNRCSHRSVLPLSSSSSVATVTSDSRRFSGHRVSPETERSSVLDSLPIFKFSSVTRRSSSMNSGDCAVCLSKFEPEDQLRLLPLCCHAFHADCIDIWLVSNQTCPLCRSPLFASESDLMKSLAVVGSNNGGGENSFRLEIGSISRRRQTPIPESVEQHRTYSIGSFDYIVDDVDSEISESNFNRGKQEDATTTTATATAVTTNPTSFEASLAADIGNDGSRSWLKDYVDRLSRGISSRAMSFRSSGRFFTGSSRRSEELTVMDLEANHAGEEISELFRWLSGV.

Residues 1-20 form a disordered region; sequence MESLINPSHGGGNYDSHSSS. A helical transmembrane segment spans residues 28–48; it reads VLVIILILLMTLLISVSICFL. The RING-type; atypical zinc-finger motif lies at 117-159; it reads CAVCLSKFEPEDQLRLLPLCCHAFHADCIDIWLVSNQTCPLCR.

The protein belongs to the RING-type zinc finger family. ATL subfamily.

Its subcellular location is the membrane. It catalyses the reaction S-ubiquitinyl-[E2 ubiquitin-conjugating enzyme]-L-cysteine + [acceptor protein]-L-lysine = [E2 ubiquitin-conjugating enzyme]-L-cysteine + N(6)-ubiquitinyl-[acceptor protein]-L-lysine.. The protein operates within protein modification; protein ubiquitination. E3 ubiquitin-protein ligase able to catalyze polyubiquitination with ubiquitin-conjugating enzyme E2 UBC8 in vitro. This chain is E3 ubiquitin-protein ligase ATL4, found in Arabidopsis thaliana (Mouse-ear cress).